The primary structure comprises 234 residues: Leucyl/phenylalanyl-tRNA--protein transferase (234 aa).

The protein belongs to the L/F-transferase family.

Its subcellular location is the cytoplasm. The enzyme catalyses N-terminal L-lysyl-[protein] + L-leucyl-tRNA(Leu) = N-terminal L-leucyl-L-lysyl-[protein] + tRNA(Leu) + H(+). The catalysed reaction is N-terminal L-arginyl-[protein] + L-leucyl-tRNA(Leu) = N-terminal L-leucyl-L-arginyl-[protein] + tRNA(Leu) + H(+). It carries out the reaction L-phenylalanyl-tRNA(Phe) + an N-terminal L-alpha-aminoacyl-[protein] = an N-terminal L-phenylalanyl-L-alpha-aminoacyl-[protein] + tRNA(Phe). In terms of biological role, functions in the N-end rule pathway of protein degradation where it conjugates Leu, Phe and, less efficiently, Met from aminoacyl-tRNAs to the N-termini of proteins containing an N-terminal arginine or lysine. The chain is Leucyl/phenylalanyl-tRNA--protein transferase from Salmonella agona (strain SL483).